Reading from the N-terminus, the 130-residue chain is Small ribosomal subunit protein uS8 (130 aa).

This sequence belongs to the universal ribosomal protein uS8 family. In terms of assembly, part of the 30S ribosomal subunit. Contacts proteins S5 and S12.

Its function is as follows. One of the primary rRNA binding proteins, it binds directly to 16S rRNA central domain where it helps coordinate assembly of the platform of the 30S subunit. This Actinobacillus succinogenes (strain ATCC 55618 / DSM 22257 / CCUG 43843 / 130Z) protein is Small ribosomal subunit protein uS8.